The sequence spans 363 residues: Mitogen-activated protein kinase 4 (363 aa).

Positions 30–318 constitute a Protein kinase domain; sequence YDLVKVVGFG…AKQVMEHPYF (289 aa). Residues 36–44 and Lys59 each bind ATP; that span reads VGFGACGTV. Asp156 (proton acceptor) is an active-site residue. 2 positions are modified to phosphoserine: Ser186 and Ser187. Position 190 is a phosphothreonine; by MKK5 (Thr190). Residues 190 to 192 carry the TQY motif; it reads TQY. Tyr192 carries the post-translational modification Phosphotyrosine; by MKK5.

The protein belongs to the protein kinase superfamily. CMGC Ser/Thr protein kinase family. MAP kinase subfamily. The cofactor is Mg(2+). Post-translationally, dually phosphorylated on Thr-190 and Tyr-192, which activates the enzyme.

It catalyses the reaction L-seryl-[protein] + ATP = O-phospho-L-seryl-[protein] + ADP + H(+). It carries out the reaction L-threonyl-[protein] + ATP = O-phospho-L-threonyl-[protein] + ADP + H(+). Its function is as follows. Essential for the two main proliferating life stages, the promastigotes and amastigotes, of the parasite. The protein is Mitogen-activated protein kinase 4 of Leishmania mexicana.